We begin with the raw amino-acid sequence, 371 residues long: N-acetyldiaminopimelate deacetylase (371 aa).

D68 is a catalytic residue. E127 serves as the catalytic Proton acceptor.

Belongs to the peptidase M20A family. N-acetyldiaminopimelate deacetylase subfamily.

The enzyme catalyses N-acetyl-(2S,6S)-2,6-diaminopimelate + H2O = (2S,6S)-2,6-diaminopimelate + acetate. It participates in amino-acid biosynthesis; L-lysine biosynthesis via DAP pathway; LL-2,6-diaminopimelate from (S)-tetrahydrodipicolinate (acetylase route): step 3/3. Functionally, catalyzes the conversion of N-acetyl-diaminopimelate to diaminopimelate and acetate. This is N-acetyldiaminopimelate deacetylase from Listeria monocytogenes serotype 4b (strain CLIP80459).